The chain runs to 1164 residues: Nuclear exosome regulator NRDE2 (1164 aa).

2 disordered regions span residues 1–25 and 39–149; these read MALFPAFAGLSEAPDGGSSRKELDW and LSQQ…GHRF. Alanine 2 is subject to N-acetylalanine. The segment covering 61–73 has biased composition (basic and acidic residues); sequence LKSESSDESDTNK. Positions 61-383 form a coiled coil; it reads LKSESSDESD…IESNQSSVDL (323 aa). A compositionally biased stretch (basic residues) spans 74 to 103; sequence KLKQTSRKKKKEKKKKRKHQHHKKTKRKHG. The span at 110-133 shows a compositional bias: basic and acidic residues; it reads SETDTDSEKDKPSRGVGGSKKESE. The MID/MTR4-interacting domain stretch occupies residues 163 to 266; sequence FRTDKKPDPA…KDLEDAAPVT (104 aa). The tract at residues 279–305 is disordered; sequence TTHWLQGQGPPEQESKQPDAQPDSESA. HAT repeat units follow at residues 305-337, 395-427, 758-792, 978-1010, and 1067-1101; these read AALKAKVEEFNRRVRENPRDTQLWMAFVAFQDE, WEPSTLVKEWQKLIFLHPNNTALWQKYLLFCQS, SQGKNCKKLAKNLLKEPENCNNFCLWKQYAHLEWL, YPLAPLREALSQALKLYPGNQVLWRSYVQIQNK, and GLMHRIQALFENAMRSDSGSQCPLLWRMYLNFLVS.

Belongs to the NRDE2 family. As to quaternary structure, interacts with MTREX; the interaction is direct and stabilizes NRDE2. Interacts with EXOSC10, EFTUD2 and EIF4A3.

Its subcellular location is the nucleus speckle. It localises to the nucleus. It is found in the nucleolus. The protein localises to the nucleoplasm. In terms of biological role, protein of the nuclear speckles that regulates RNA degradation and export from the nucleus through its interaction with MTREX an essential factor directing various RNAs to exosomal degradation. Changes the conformation of MTREX, precluding its association with the nuclear exosome and interaction with proteins required for its function in RNA exosomal degradation. Negatively regulates, for instance, the degradation of mRNAs and lncRNAs by inhibiting their MTREX-mediated recruitment to nuclear exosome. By preventing the degradation of RNAs in the nucleus, it promotes their export to the cytoplasm. U5 snRNP-associated RNA splicing factor which is required for efficient splicing of CEP131 pre-mRNA and plays an important role in centrosome maturation, integrity and function during mitosis. Suppresses intron retention in a subset of pre-mRNAs containing short, GC-rich introns with relatively weak 5' and 3' splice sites. Plays a role in DNA damage response. The sequence is that of Nuclear exosome regulator NRDE2 from Homo sapiens (Human).